Reading from the N-terminus, the 923-residue chain is MGSGAGELGRAERLPVLFLFLLSLFCPALCEQIRYRIPEEMPKGSVVGNLATDLGFSVQELPTRKLRVSSEKPYFTVSAESGELLVSSRLDREEICGKKPACALEFEAVAENPLNFYHVNVEIEDINDHTPKFTQNSFELQISESAQPGTRFILGSAHDADIGSNTLQNYQLSPSDHFSLINKEKSDGSKYPEMVLKTPLDREKQKSYHLTLTALDFGAPPLSSTAQIHVLVTDANDNAPVFSQDVYRVSLSENVYPGTTVLQVTATDQDEGVNAEITFSFSEASQITQFDLNSNTGEITVLNTLDFEEVKEYSIVLEARDGGGMIAQCTVEVEVIDENDNAPEVIFQSLPNLIMEDAELGTHIALLKVRDKDSRHNGEVTCKLEGDVPFKILTSSRNTYKLVTDAVLDREQNPEYNITVTATDRGKPPLSSSSSITLHIGDVNDNAPVFSQSSYIVHVAENNPPGASISQVRASDPDLGPNGQVSYCIMASDLEQRELSSYVSISAESGVVFAQRAFDHEQLRAFELTLQARDQGSPALSANVSLRVLVDDRNDNAPRVLYPALGPDGSALFDMVPHAAEPGYLVTKVVAVDADSGHNAWLSYHVLQASEPGLFSLGLRTGEVRTARALGDRDAVRQRLLVAVRDGGQPPLSATATLHLVFADSLQEVLPDITDRPDPSDLQAELQFYLVVALALISVLFLVAMILAIALRLRRSSSPASWSCFQPGLCVKSESVVPPNYSEGTLPYSYNLCVAHTGKTEFNFLKCSEQLSSGQDILCGDSSGALFPLCNSSELTSHQQAPPNTDWRFSQAQRPGTSGSQNGDDTGTWPNNQFDTEMLQAMILASASEAADGSSTLGGGAGTMGLSARYGPQFTLQHVPDYRQNVYIPGSNATLTNAAGKRDGKAPAGGNGNKKKSGKKEKK.

The N-terminal stretch at 1-30 (MGSGAGELGRAERLPVLFLFLLSLFCPALC) is a signal peptide. Cadherin domains follow at residues 31 to 133 (EQIR…TPKF), 134 to 242 (TQNS…APVF), 243 to 345 (SQDV…APEV), 346 to 450 (IFQS…APVF), 451 to 560 (SQSS…APRV), and 568 to 673 (DGSA…LPDI). At 31 to 689 (EQIRYRIPEE…SDLQAELQFY (659 aa)) the chain is on the extracellular side. Residues Asn417 and Asn543 are each glycosylated (N-linked (GlcNAc...) asparagine). Residues 690–710 (LVVALALISVLFLVAMILAIA) form a helical membrane-spanning segment. The Cytoplasmic segment spans residues 711–923 (LRLRRSSSPA…KKKSGKKEKK (213 aa)). 2 disordered regions span residues 797–832 (SHQQAPPNTDWRFSQAQRPGTSGSQNGDDTGTWPNN) and 893–923 (ATLTNAAGKRDGKAPAGGNGNKKKSGKKEKK). The span at 913-923 (NKKKSGKKEKK) shows a compositional bias: basic residues.

It is found in the cell membrane. Functionally, potential calcium-dependent cell-adhesion protein. May be involved in the establishment and maintenance of specific neuronal connections in the brain. This is Protocadherin gamma-B4 (PCDHGB4) from Homo sapiens (Human).